The sequence spans 150 residues: Large ribosomal subunit protein bL9 (150 aa).

Belongs to the bacterial ribosomal protein bL9 family.

Binds to the 23S rRNA. In Neisseria meningitidis serogroup B (strain ATCC BAA-335 / MC58), this protein is Large ribosomal subunit protein bL9.